A 389-amino-acid polypeptide reads, in one-letter code: Putative teichuronic acid biosynthesis glycosyltransferase TuaC (389 aa).

The protein belongs to the glycosyltransferase group 1 family. Glycosyltransferase 4 subfamily.

The protein operates within cell wall biogenesis; teichuronic acid biosynthesis. The chain is Putative teichuronic acid biosynthesis glycosyltransferase TuaC (tuaC) from Bacillus subtilis (strain 168).